Here is a 382-residue protein sequence, read N- to C-terminus: Alkane 1-monooxygenase 2 (382 aa).

A run of 4 helical transmembrane segments spans residues 17 to 37 (GYLAFWAIMVPLVPFSAFVGV), 45 to 65 (WAWFMYAFIFGIIPVLDYLVG), 88 to 108 (VSAIAMGFVWIAVLFYAGHIF), and 114 to 134 (GLLGKIGWIVSIGTVGGIIAI). Fe cation is bound by residues His-138, His-142, His-168, His-172, and His-173. A helical membrane pass occupies residues 236 to 256 (ALFAATFGLLWGWQGVVFFLG). His-312, His-315, and His-316 together coordinate Fe cation.

Belongs to the fatty acid desaturase type 1 family. AlkB subfamily. Fe(3+) is required as a cofactor.

It is found in the cell inner membrane. It carries out the reaction octane + 2 reduced [rubredoxin] + O2 + 2 H(+) = 2 oxidized [rubredoxin] + octan-1-ol + H2O. It functions in the pathway hydrocarbon metabolism; alkane degradation. Functionally, catalyzes the hydroxylation of n-alkanes in the presence of a NADH-rubredoxin reductase and rubredoxin. It preferably hydroxylases C8-C16 hydrocarbons. This chain is Alkane 1-monooxygenase 2 (alkB2), found in Alcanivorax borkumensis (strain ATCC 700651 / DSM 11573 / NCIMB 13689 / SK2).